The following is a 216-amino-acid chain: Glutathione S-transferase D5 (216 aa).

Residues 1–80 (MDFYYSPRGS…YLVEKYGKDD (80 aa)) form the GST N-terminal domain. Glutathione contacts are provided by residues 50–52 (HTI) and 64–66 (ESR). The GST C-terminal domain occupies 86-207 (DPKKQALVNQ…KGAVELKGVF (122 aa)).

Belongs to the GST superfamily. Delta family. As to quaternary structure, homodimer.

The enzyme catalyses RX + glutathione = an S-substituted glutathione + a halide anion + H(+). Conjugation of reduced glutathione to a wide number of exogenous and endogenous hydrophobic electrophiles. May be involved in detoxification. In Drosophila melanogaster (Fruit fly), this protein is Glutathione S-transferase D5.